The following is a 307-amino-acid chain: Methionyl-tRNA formyltransferase (307 aa).

(6S)-5,6,7,8-tetrahydrofolate is bound at residue 108–111 (SLLP).

Belongs to the Fmt family.

The catalysed reaction is L-methionyl-tRNA(fMet) + (6R)-10-formyltetrahydrofolate = N-formyl-L-methionyl-tRNA(fMet) + (6S)-5,6,7,8-tetrahydrofolate + H(+). In terms of biological role, attaches a formyl group to the free amino group of methionyl-tRNA(fMet). The formyl group appears to play a dual role in the initiator identity of N-formylmethionyl-tRNA by promoting its recognition by IF2 and preventing the misappropriation of this tRNA by the elongation apparatus. The chain is Methionyl-tRNA formyltransferase from Xanthomonas oryzae pv. oryzae (strain MAFF 311018).